Consider the following 433-residue polypeptide: tRNA-2-methylthio-N(6)-dimethylallyladenosine synthase (433 aa).

The 116-residue stretch at 3 to 118 (KKLFIQTLGC…ITKAVNTPKF (116 aa)) folds into the MTTase N-terminal domain. Residues C12, C49, C81, C150, C154, and C157 each coordinate [4Fe-4S] cluster. Residues 136-369 (RGSPYKSHIN…QNRHSEILDE (234 aa)) enclose the Radical SAM core domain. The TRAM domain occupies 372–433 (AAQKDKIFDV…RMVLYGELQI (62 aa)).

The protein belongs to the methylthiotransferase family. MiaB subfamily. As to quaternary structure, monomer. [4Fe-4S] cluster is required as a cofactor.

The protein localises to the cytoplasm. It carries out the reaction N(6)-dimethylallyladenosine(37) in tRNA + (sulfur carrier)-SH + AH2 + 2 S-adenosyl-L-methionine = 2-methylsulfanyl-N(6)-dimethylallyladenosine(37) in tRNA + (sulfur carrier)-H + 5'-deoxyadenosine + L-methionine + A + S-adenosyl-L-homocysteine + 2 H(+). Functionally, catalyzes the methylthiolation of N6-(dimethylallyl)adenosine (i(6)A), leading to the formation of 2-methylthio-N6-(dimethylallyl)adenosine (ms(2)i(6)A) at position 37 in tRNAs that read codons beginning with uridine. This chain is tRNA-2-methylthio-N(6)-dimethylallyladenosine synthase, found in Campylobacter concisus (strain 13826).